Reading from the N-terminus, the 270-residue chain is MTVITKIEVQKRSKERFNIYIDKGQGEEYGFSVNQSILMKHGLQKGLEIDEVALGNILYNEEVQKAYLQAISYLSYQMRTKQEIEDFLRKKEVGQAIISEVVSKLLHDRYINDKEYAISYVRTQSNVNQKGPTVIRRGLLSKGVQDLIITHSLQEYPKEKQMENALFLIEKKKKSYQKHSFLQMKLKLDEMLVRKGYSRDVIQICLEELKDEKDDEQQQEALHYHGNKYYEKYKKYDGWTFENKVKQALYRKGFSIDEIDIFLQMKREEG.

This sequence belongs to the RecX family.

Its subcellular location is the cytoplasm. Its function is as follows. Modulates RecA activity. The sequence is that of Regulatory protein RecX from Bacillus mycoides (strain KBAB4) (Bacillus weihenstephanensis).